Reading from the N-terminus, the 214-residue chain is Proteasome subunit beta type-6 (214 aa).

Residues 1–14 constitute a propeptide, removed in mature form; it reads MEAPEWLDNAVDLG. Thr-15 serves as the catalytic Nucleophile.

This sequence belongs to the peptidase T1B family. In terms of assembly, the 26S proteasome consists of a 20S proteasome core and two 19S regulatory subunits. The 20S proteasome core is composed of 28 subunits that are arranged in four stacked rings, resulting in a barrel-shaped structure. The two end rings are each formed by seven alpha subunits, and the two central rings are each formed by seven beta subunits. The catalytic chamber with the active sites is on the inside of the barrel.

The protein resides in the cytoplasm. It is found in the nucleus. It carries out the reaction Cleavage of peptide bonds with very broad specificity.. The proteasome is a multicatalytic proteinase complex which is characterized by its ability to cleave peptides with Arg, Phe, Tyr, Leu, and Glu adjacent to the leaving group at neutral or slightly basic pH. The proteasome has an ATP-dependent proteolytic activity. The sequence is that of Proteasome subunit beta type-6 (psmB6) from Dictyostelium discoideum (Social amoeba).